Reading from the N-terminus, the 517-residue chain is Crotonobetaine/carnitine--CoA ligase (517 aa).

It belongs to the ATP-dependent AMP-binding enzyme family.

The enzyme catalyses 4-(trimethylamino)butanoate + ATP + CoA = 4-(trimethylamino)butanoyl-CoA + AMP + diphosphate. It catalyses the reaction crotonobetaine + ATP + CoA = crotonobetainyl-CoA + AMP + diphosphate. It carries out the reaction (R)-carnitine + ATP + CoA = (R)-carnitinyl-CoA + AMP + diphosphate. The protein operates within amine and polyamine metabolism; carnitine metabolism. Catalyzes the transfer of CoA to carnitine, generating the initial carnitinyl-CoA needed for the CaiB reaction cycle. Also has activity toward crotonobetaine and gamma-butyrobetaine. In Salmonella paratyphi C (strain RKS4594), this protein is Crotonobetaine/carnitine--CoA ligase.